The sequence spans 265 residues: Type 1 encapsulin shell protein (265 aa).

FMN-binding positions include 79–81, W87, and 90–94; these read RAT and DNLER. The segment at 184–189 is pore-forming loop; it reads EAGHYP. E235 contacts FMN.

This sequence belongs to the encapsulin family. Family 1 subfamily. As to quaternary structure, homomultimeric. This encapsulin nanocompartment is formed by 60 subunits; monomers form 12 pentamers which assemble to form shells. There are 12 pores where the pentamers meet as well as 3-fold axis channels and dimer channels; none are larger than 3-4 Angstroms in diameter. The N-terminus of the protein is inside the shell, the C-terminus is outside. Probably 3, 4 or 5 Flp cargo decamers bind inside the encapulin nanocompartment. FMN is required as a cofactor.

The protein localises to the encapsulin nanocompartment. Proteolysis activated by calcium and cobalt. Shell component of a type 1 encapsulin nanocompartment. Assembles into proteinaceous shells 23-24 nm in diameter with 2-2.5 nm thick walls. Cargo protein Flp (ferritin-like protein, probably stores iron) is targeted to the interior via its C-terminal extension; empty intact shells can be isolated in the absence of cargo protein. Fe(2+) may be able to pass though the 5-fold and dimer channels in the protein shell. Functionally, protease that exhibits activity toward chymotrypsin and trypsin substrates. Probably does not have antibacterial activity. The sequence is that of Type 1 encapsulin shell protein from Thermotoga maritima (strain ATCC 43589 / DSM 3109 / JCM 10099 / NBRC 100826 / MSB8).